Here is an 82-residue protein sequence, read N- to C-terminus: Omega-conotoxin-like TxO6 (82 aa).

The N-terminal stretch at 1-22 (MKLTCVVIVAVLFLTAWTLVMA) is a signal peptide. The propeptide occupies 23-50 (DDSNNGLANLFSKSRDEMEDPEAAKLEK). 3 disulfides stabilise this stretch: cysteine 53/cysteine 71, cysteine 60/cysteine 76, and cysteine 70/cysteine 81.

Belongs to the conotoxin O1 superfamily. Expressed by the venom duct.

It is found in the secreted. Functionally, omega-conotoxins act at presynaptic membranes, they bind and block voltage-gated calcium channels (Cav). This Conus textile (Cloth-of-gold cone) protein is Omega-conotoxin-like TxO6.